A 764-amino-acid polypeptide reads, in one-letter code: DNA polymerase 3 (764 aa).

It belongs to the DNA polymerase type-B family.

The catalysed reaction is DNA(n) + a 2'-deoxyribonucleoside 5'-triphosphate = DNA(n+1) + diphosphate. In Saccharolobus solfataricus (strain ATCC 35092 / DSM 1617 / JCM 11322 / P2) (Sulfolobus solfataricus), this protein is DNA polymerase 3 (dpo3).